Here is a 284-residue protein sequence, read N- to C-terminus: P2R1A-PPP2R2A-interacting phosphatase regulator 1 (284 aa).

3 disordered regions span residues Met1–Ala32, Glu112–Arg198, and Ala235–Asp284. Low complexity-rich tracts occupy residues Ser152–Leu164 and Pro172–Pro184. Residues Ser258–Arg269 are compositionally biased toward polar residues.

Belongs to the FAM122 family.

Its subcellular location is the nucleus. The protein localises to the cytoplasm. Acts as an inhibitor of serine/threonine-protein phosphatase 2A (PP2A) activity. Potentiates ubiquitin-mediated proteasomal degradation of serine/threonine-protein phosphatase 2A catalytic subunit alpha (PPP2CA). Inhibits PP2A-mediated dephosphorylation of WEE1, promoting ubiquitin-mediated proteolysis of WEE1, thereby releasing G2/M checkpoint. In Gallus gallus (Chicken), this protein is P2R1A-PPP2R2A-interacting phosphatase regulator 1.